The following is a 420-amino-acid chain: Gamma-glutamyl phosphate reductase (420 aa).

This sequence belongs to the gamma-glutamyl phosphate reductase family.

It localises to the cytoplasm. The catalysed reaction is L-glutamate 5-semialdehyde + phosphate + NADP(+) = L-glutamyl 5-phosphate + NADPH + H(+). It participates in amino-acid biosynthesis; L-proline biosynthesis; L-glutamate 5-semialdehyde from L-glutamate: step 2/2. Its function is as follows. Catalyzes the NADPH-dependent reduction of L-glutamate 5-phosphate into L-glutamate 5-semialdehyde and phosphate. The product spontaneously undergoes cyclization to form 1-pyrroline-5-carboxylate. In Streptococcus pneumoniae serotype 2 (strain D39 / NCTC 7466), this protein is Gamma-glutamyl phosphate reductase.